Consider the following 488-residue polypeptide: MTKTERYLQLRSMIPEMRRIKRIHFVGIGGAGMGGIAEVLVNEGYVVSGSDIAQNAVTDRLCLLGAKIHIGHGADNVQQADVVVVSTAINPENPEIIAAKELRIPIVRRAEMLAELMRYRHGVAIAGTHGKTTTTSLIASLYGQAGRDPTFVIGGLLNSAGTNARLGTSRYLIAEADESDASFLHLQPMVSVVTNIEADHMDTYGGDFEKLKSTFVDFLHNLPFYGVAVVCIDDAVVREIMPRIGRHMITYGFSDDADVQALNFQQQGHQCRFTVRRKGKEDLDLLLNLPGQHNVLNALAAIAVATEDEIDDSAIIQALAEFQGIGRRFQHLGKFATPKGEVMLVDDYGHHPSEVAATIKAARAGWPDKRLVMAYQPHRYTRTRDLYEDFIEVLSQVDCLLLLEVYSAGEAPIPGADGRALCRSIRLRGQLDPIFIASPDQLAEVLPDVLQEGDLLLTQGAGNIGALSRQLAASELGFSTAATTEVKP.

Residue 127–133 (GTHGKTT) participates in ATP binding.

This sequence belongs to the MurCDEF family.

The protein resides in the cytoplasm. It catalyses the reaction UDP-N-acetyl-alpha-D-muramate + L-alanine + ATP = UDP-N-acetyl-alpha-D-muramoyl-L-alanine + ADP + phosphate + H(+). It participates in cell wall biogenesis; peptidoglycan biosynthesis. Its function is as follows. Cell wall formation. This is UDP-N-acetylmuramate--L-alanine ligase from Shewanella sp. (strain MR-4).